We begin with the raw amino-acid sequence, 275 residues long: Large ribosomal subunit protein uL2 (275 aa).

Residues 223 to 275 (VVMNPVDHPHGGGEGKSSGGRHPVSPWGMPTKGYKTRKNKGTDQYIVRRRNKK) form a disordered region.

Belongs to the universal ribosomal protein uL2 family. As to quaternary structure, part of the 50S ribosomal subunit. Forms a bridge to the 30S subunit in the 70S ribosome.

Functionally, one of the primary rRNA binding proteins. Required for association of the 30S and 50S subunits to form the 70S ribosome, for tRNA binding and peptide bond formation. It has been suggested to have peptidyltransferase activity; this is somewhat controversial. Makes several contacts with the 16S rRNA in the 70S ribosome. This is Large ribosomal subunit protein uL2 from Psychromonas ingrahamii (strain DSM 17664 / CCUG 51855 / 37).